We begin with the raw amino-acid sequence, 497 residues long: NAD(P)H-quinone oxidoreductase chain 4, chloroplastic (497 aa).

13 helical membrane-spanning segments follow: residues 4 to 24 (LPWL…IPLF), 35 to 55 (YTLG…CCHF), 87 to 107 (MGLI…AWPV), 113 to 133 (LFHF…ASQD), 134 to 154 (ILLF…LLSI), 167 to 187 (FILY…TIGL), 207 to 227 (IALE…KLPI), 242 to 262 (HYST…YGLI), 274 to 294 (AIFA…ASLI), 313 to 333 (MGFV…GAIL), 386 to 406 (LALP…GIVI), 416 to 436 (IVIT…LLSM), and 462 to 482 (IFIS…PNLV).

Belongs to the complex I subunit 4 family.

It localises to the plastid. Its subcellular location is the chloroplast thylakoid membrane. It catalyses the reaction a plastoquinone + NADH + (n+1) H(+)(in) = a plastoquinol + NAD(+) + n H(+)(out). The enzyme catalyses a plastoquinone + NADPH + (n+1) H(+)(in) = a plastoquinol + NADP(+) + n H(+)(out). The protein is NAD(P)H-quinone oxidoreductase chain 4, chloroplastic of Angiopteris evecta (Mule's foot fern).